A 316-amino-acid polypeptide reads, in one-letter code: Putative phosphoribosylaminoimidazole-succinocarboxamide synthase 2 (316 aa).

This sequence belongs to the SAICAR synthetase family.

The enzyme catalyses 5-amino-1-(5-phospho-D-ribosyl)imidazole-4-carboxylate + L-aspartate + ATP = (2S)-2-[5-amino-1-(5-phospho-beta-D-ribosyl)imidazole-4-carboxamido]succinate + ADP + phosphate + 2 H(+). Its pathway is purine metabolism; IMP biosynthesis via de novo pathway; 5-amino-1-(5-phospho-D-ribosyl)imidazole-4-carboxamide from 5-amino-1-(5-phospho-D-ribosyl)imidazole-4-carboxylate: step 1/2. The polypeptide is Putative phosphoribosylaminoimidazole-succinocarboxamide synthase 2 (purC2) (Agrobacterium fabrum (strain C58 / ATCC 33970) (Agrobacterium tumefaciens (strain C58))).